Here is a 119-residue protein sequence, read N- to C-terminus: Large ribosomal subunit protein uL18 (119 aa).

It belongs to the universal ribosomal protein uL18 family. As to quaternary structure, part of the 50S ribosomal subunit; part of the 5S rRNA/L5/L18/L25 subcomplex. Contacts the 5S and 23S rRNAs.

Its function is as follows. This is one of the proteins that bind and probably mediate the attachment of the 5S RNA into the large ribosomal subunit, where it forms part of the central protuberance. In Xanthomonas axonopodis pv. citri (strain 306), this protein is Large ribosomal subunit protein uL18.